The sequence spans 326 residues: Beta-ketoacyl-[acyl-carrier-protein] synthase III (326 aa).

Catalysis depends on residues Cys-120 and His-253. An ACP-binding region spans residues 254-258 (QANIR). Residue Asn-283 is part of the active site.

It belongs to the thiolase-like superfamily. FabH family. As to quaternary structure, homodimer.

Its subcellular location is the cytoplasm. It catalyses the reaction malonyl-[ACP] + acetyl-CoA + H(+) = 3-oxobutanoyl-[ACP] + CO2 + CoA. It participates in lipid metabolism; fatty acid biosynthesis. Functionally, catalyzes the condensation reaction of fatty acid synthesis by the addition to an acyl acceptor of two carbons from malonyl-ACP. Catalyzes the first condensation reaction which initiates fatty acid synthesis and may therefore play a role in governing the total rate of fatty acid production. Possesses both acetoacetyl-ACP synthase and acetyl transacylase activities. Its substrate specificity determines the biosynthesis of branched-chain and/or straight-chain of fatty acids. This Ralstonia nicotianae (strain ATCC BAA-1114 / GMI1000) (Ralstonia solanacearum) protein is Beta-ketoacyl-[acyl-carrier-protein] synthase III.